The sequence spans 459 residues: MSNKAWGGRFEVQPEEWVDDFNASITFDQTLINQDIEGSIAHATMLANQGIISQQDSEQIIQGLKSIQHDYHQDQIQFSASLEDIHLNIEHELIKRIGDAGGKLHTGRSRNDQVATDMHLYTKKQVQDIIALIKSLQSVIVDIASNNVDTIMPGYTHLQRAQPISFAHHIMTYFWMLQRDQQRFEDSLKRIDINPLGAAALSGTTYPIDRHETTALLNFGSLYENSLDAVSDRDYIIETLHNISLTMVHLSRFAEEIIFWSTDEAKFITLSDAFSTGSSIMPQKKNPDMAELIRGKVGRTTGHLMSMLMTLKGLPLAYNKDMQEDKEGLFDAVHTIKGSLRIFEGMIQTMTINKERLNQTVKEDFSNATELADYLVTKNIPFRTAHEIVGKIVLECIQQGHYLLDVPLATYQQHHSSIDADIYDYLQPENCLKRRQSYGSTGQSSVKQQLDVAKQLLSQ.

This sequence belongs to the lyase 1 family. Argininosuccinate lyase subfamily.

The protein resides in the cytoplasm. The enzyme catalyses 2-(N(omega)-L-arginino)succinate = fumarate + L-arginine. It functions in the pathway amino-acid biosynthesis; L-arginine biosynthesis; L-arginine from L-ornithine and carbamoyl phosphate: step 3/3. The protein is Argininosuccinate lyase of Staphylococcus aureus (strain MSSA476).